Here is a 290-residue protein sequence, read N- to C-terminus: Acetyl-coenzyme A carboxylase carboxyl transferase subunit beta (290 aa).

The region spanning 27–290 (LWVKCPSCEA…LQRQPADALA (264 aa)) is the CoA carboxyltransferase N-terminal domain. Zn(2+)-binding residues include cysteine 31, cysteine 34, cysteine 50, and cysteine 53. The segment at 31–53 (CPSCEAVLYRNDVDANLHVCPKC) adopts a C4-type zinc-finger fold.

Belongs to the AccD/PCCB family. In terms of assembly, acetyl-CoA carboxylase is a heterohexamer composed of biotin carboxyl carrier protein (AccB), biotin carboxylase (AccC) and two subunits each of ACCase subunit alpha (AccA) and ACCase subunit beta (AccD). Zn(2+) serves as cofactor.

It is found in the cytoplasm. It catalyses the reaction N(6)-carboxybiotinyl-L-lysyl-[protein] + acetyl-CoA = N(6)-biotinyl-L-lysyl-[protein] + malonyl-CoA. It functions in the pathway lipid metabolism; malonyl-CoA biosynthesis; malonyl-CoA from acetyl-CoA: step 1/1. Component of the acetyl coenzyme A carboxylase (ACC) complex. Biotin carboxylase (BC) catalyzes the carboxylation of biotin on its carrier protein (BCCP) and then the CO(2) group is transferred by the transcarboxylase to acetyl-CoA to form malonyl-CoA. The chain is Acetyl-coenzyme A carboxylase carboxyl transferase subunit beta from Burkholderia multivorans (strain ATCC 17616 / 249).